Reading from the N-terminus, the 922-residue chain is Band 3 anion transport protein (922 aa).

2 disordered regions span residues 1–36 (MEGP…TMSN) and 355–389 (QHPD…LRTR). Over 1–416 (MEGPGQDTED…LSDIRDALNP (416 aa)) the chain is Cytoplasmic. A compositionally biased stretch (basic and acidic residues) spans 10 to 26 (DALRRSLDPEGYEDTKG). Positions 27-36 (SRTSLGTMSN) are enriched in polar residues. Residues 417 to 440 (QCLAAVIFIYFAALSPAITFGGLL) traverse the membrane as a helical segment. The Extracellular segment spans residues 441–448 (GEKTRGMM). The helical transmembrane segment at 449 to 469 (GVSELLLSTSVQCLLFSLLSA) threads the bilayer. The Cytoplasmic portion of the chain corresponds to 470–472 (QPL). A discontinuously helical membrane pass occupies residues 473–489 (LVVGFSGPLLVFEEAFF). Over 490 to 498 (RFCEDHGLE) the chain is Extracellular. The chain crosses the membrane as a helical span at residues 499-519 (YIVGRVWIGFWLILLVLLVVA). Topologically, residues 520–531 (CEGTVLVRYLSR) are cytoplasmic. The helical transmembrane segment at 532–554 (YTQEIFSFLISLIFIYETFAKLV) threads the bilayer. The Extracellular segment spans residues 555–581 (TIFEAHPLQQSYDTDVSTEPSVPKPNT). The helical transmembrane segment at 582-602 (ALLSLVLMAGTFFLALFLRQF) threads the bilayer. At 603 to 613 (KNSVFLPGKVR) the chain is on the cytoplasmic side. A helical transmembrane segment spans residues 614-634 (RLIGDFGVPISIFVMALADFF). Over 635-674 (IKDTYTQKLKVPRGLEVTNGTARGWFIHPMGSATPFPIWM) the chain is Extracellular. The N-linked (GlcNAc...) asparagine glycan is linked to N653. A helical membrane pass occupies residues 675–695 (MFASPVPALLVFILIFLETQI). Residues 696-711 (TTLIVSKPERKLVKGS) are Cytoplasmic-facing. Residues 712–730 (GFHLDLLLIVAMGGLAALF) traverse the membrane as a helical segment. Residues 731-748 (GMPWLSATTVRTITHANA) traverse the membrane as a discontinuously helical segment. Residues 749–771 (LTVVGKSAVPGERAHIVEVKEQR) are Cytoplasmic-facing. 2 consecutive transmembrane segments (helical) span residues 772–792 (LSGL…PILK) and 793–811 (YIPL…VTSL). Residues 812 to 849 (FGIQLFDRILLLLMPPKYHPKEPYVTRVKTWRITSSPL) are Cytoplasmic-facing. The segment at residues 850–880 (TQILVVALLWGVKVSPASLRCPFVLVLTVPL) is an intramembrane region (discontinuously helical). The Cytoplasmic segment spans residues 881–922 (RRLLLPRIFSEIELKCLDTDDAVVTFEEAEGQDVYNEVQMPS).

It belongs to the anion exchanger (TC 2.A.31) family. As to quaternary structure, a dimer in solution, it spans the membrane asymmetrically and appears to be tetrameric. As to expression, erythrocytes.

The protein resides in the cell membrane. The protein localises to the basolateral cell membrane. The catalysed reaction is hydrogencarbonate(in) + chloride(out) = hydrogencarbonate(out) + chloride(in). Functionally, functions both as a transporter that mediates electroneutral anion exchange across the cell membrane and as a structural protein. Major integral membrane glycoprotein of the erythrocyte membrane; required for normal flexibility and stability of the erythrocyte membrane and for normal erythrocyte shape via the interactions of its cytoplasmic domain with cytoskeletal proteins, glycolytic enzymes, and hemoglobin. Functions as a transporter that mediates the 1:1 exchange of inorganic anions across the erythrocyte membrane. Mediates chloride-bicarbonate exchange in the kidney, and is required for normal acidification of the urine. This is Band 3 anion transport protein (SLC4A1) from Gallus gallus (Chicken).